Here is a 377-residue protein sequence, read N- to C-terminus: Nitric oxide reductase FlRd-NAD(+) reductase (377 aa).

The protein belongs to the FAD-dependent oxidoreductase family. FAD serves as cofactor.

The protein resides in the cytoplasm. It carries out the reaction 2 reduced [nitric oxide reductase rubredoxin domain] + NAD(+) + H(+) = 2 oxidized [nitric oxide reductase rubredoxin domain] + NADH. It functions in the pathway nitrogen metabolism; nitric oxide reduction. Functionally, one of at least two accessory proteins for anaerobic nitric oxide (NO) reductase. Reduces the rubredoxin moiety of NO reductase. The sequence is that of Nitric oxide reductase FlRd-NAD(+) reductase from Escherichia coli O7:K1 (strain IAI39 / ExPEC).